The following is a 421-amino-acid chain: WD repeat and SOCS box-containing protein 1 (421 aa).

WD repeat units follow at residues 124 to 165 (SRCV…LLLN), 168 to 208 (DHIE…NMVK), 212 to 251 (AHQN…MIRK), 254 to 293 (GHHH…LLME), and 309 to 346 (ANDR…DCPV). Residues 372–421 (DGSVYFWATPRQVPSLQHICRMSIRRVMSTQEVQKLPVPSKILAFLSYRG) form the SOCS box domain.

As to quaternary structure, interacts with DIO2. Component of the probable ECS(WSB1) E3 ubiquitin-protein ligase complex which contains CUL5, RNF7/RBX2, Elongin BC complex and WSB1. Component of a probable ECS-like E3 ubiquitin-protein ligase complex which contains CUL5, RBX1, Elongin BC complex and WSB1. Interacts with CUL5, RNF7, ELOB and ELOC. Binds to HIPK2 through WD40 repeats.

It participates in protein modification; protein ubiquitination. In terms of biological role, probable substrate-recognition component of a SCF-like ECS (Elongin-Cullin-SOCS-box protein) E3 ubiquitin ligase complex which mediates the ubiquitination and subsequent proteasomal degradation of target proteins. Recognizes type II iodothyronine deiodinase/DIO2. Confers constitutive instability to HIPK2 through proteasomal degradation. The chain is WD repeat and SOCS box-containing protein 1 (Wsb1) from Mus musculus (Mouse).